We begin with the raw amino-acid sequence, 190 residues long: Elongation factor P 2 (190 aa).

This sequence belongs to the elongation factor P family.

Its subcellular location is the cytoplasm. It functions in the pathway protein biosynthesis; polypeptide chain elongation. Its function is as follows. Involved in peptide bond synthesis. Stimulates efficient translation and peptide-bond synthesis on native or reconstituted 70S ribosomes in vitro. Probably functions indirectly by altering the affinity of the ribosome for aminoacyl-tRNA, thus increasing their reactivity as acceptors for peptidyl transferase. In Chlamydia pneumoniae (Chlamydophila pneumoniae), this protein is Elongation factor P 2 (efp2).